A 161-amino-acid chain; its full sequence is Cysteine dioxygenase (161 aa).

Positions 75, 77, and 125 each coordinate Fe cation.

Belongs to the cysteine dioxygenase family. Requires Fe cation as cofactor.

The catalysed reaction is L-cysteine + O2 = 3-sulfino-L-alanine + H(+). This is Cysteine dioxygenase (cdoA) from Bacillus subtilis (strain 168).